We begin with the raw amino-acid sequence, 85 residues long: Small ribosomal subunit protein uS17 (85 aa).

The protein belongs to the universal ribosomal protein uS17 family. Part of the 30S ribosomal subunit.

In terms of biological role, one of the primary rRNA binding proteins, it binds specifically to the 5'-end of 16S ribosomal RNA. The sequence is that of Small ribosomal subunit protein uS17 from Geobacter metallireducens (strain ATCC 53774 / DSM 7210 / GS-15).